Here is a 402-residue protein sequence, read N- to C-terminus: Methylthioribose-1-phosphate isomerase (402 aa).

Aspartate 275 acts as the Proton donor in catalysis.

The protein belongs to the eIF-2B alpha/beta/delta subunits family. MtnA subfamily.

The protein resides in the cytoplasm. It localises to the nucleus. The catalysed reaction is 5-(methylsulfanyl)-alpha-D-ribose 1-phosphate = 5-(methylsulfanyl)-D-ribulose 1-phosphate. Its pathway is amino-acid biosynthesis; L-methionine biosynthesis via salvage pathway; L-methionine from S-methyl-5-thio-alpha-D-ribose 1-phosphate: step 1/6. Catalyzes the interconversion of methylthioribose-1-phosphate (MTR-1-P) into methylthioribulose-1-phosphate (MTRu-1-P). This is Methylthioribose-1-phosphate isomerase from Clavispora lusitaniae (strain ATCC 42720) (Yeast).